The following is an 89-amino-acid chain: Acylphosphatase (89 aa).

Residues Cys3–Tyr89 form the Acylphosphatase-like domain. Residues Arg18 and Asn36 contribute to the active site.

Belongs to the acylphosphatase family.

The catalysed reaction is an acyl phosphate + H2O = a carboxylate + phosphate + H(+). The chain is Acylphosphatase (acyP) from Petrotoga mobilis (strain DSM 10674 / SJ95).